The following is a 470-amino-acid chain: MLKEKLIIIITLVMLLCACDIQEQSTQLAQIKAQNKIRVGTLASASNYYQAVQGEQGFEYELSQAFADYLGVELEIVPFFNLSDMFARLQSGDLDLIASGLTYNKTRAQQYRFGPTYRTISQKLVYKQGIERPRDYDDLTGNLMVIAKSSHSLTLQKVKKSNPELNWSETEEFDEEELLQAVIDGEIDYTLADTHTLSLFRRYHPNLSIGFSITHNDPIAWMLRKSNDDSLYALLVPFFGEAKQNNQLYVLEEKYFGHVRQFNYVNTLAYIEAIKETLPKYQPWFEQYAGTLDWRLLAALSYQESMWNPRAKSPTGVRGIMMLTRNTAKQVGVTNRLEPEQNIRGGAKYLSKLIKRIPDRIPQPDRTWLALAAYNVGWGHVNDARIITKQQGASPDKWADVKKRLPLLIKKRYYRKTRYGYSRGDVAVSYVDNIRRYYDALVWLDENNAIEEKPEAPVVAPKIGDEVEAK.

Positions 1–21 (MLKEKLIIIITLVMLLCACDI) are cleaved as a signal peptide. The interval 22–259 (QEQSTQLAQI…VLEEKYFGHV (238 aa)) is non-LT domain. Positions 260 to 470 (RQFNYVNTLA…PKIGDEVEAK (211 aa)) are LT domain. The active site involves E304.

This sequence in the N-terminal section; belongs to the bacterial solute-binding protein 3 family. In the C-terminal section; belongs to the transglycosylase Slt family.

The protein localises to the cell outer membrane. It carries out the reaction Exolytic cleavage of the (1-&gt;4)-beta-glycosidic linkage between N-acetylmuramic acid (MurNAc) and N-acetylglucosamine (GlcNAc) residues in peptidoglycan, from either the reducing or the non-reducing ends of the peptidoglycan chains, with concomitant formation of a 1,6-anhydrobond in the MurNAc residue.. Its function is as follows. Murein-degrading enzyme that degrades murein glycan strands and insoluble, high-molecular weight murein sacculi, with the concomitant formation of a 1,6-anhydromuramoyl product. Lytic transglycosylases (LTs) play an integral role in the metabolism of the peptidoglycan (PG) sacculus. Their lytic action creates space within the PG sacculus to allow for its expansion as well as for the insertion of various structures such as secretion systems and flagella. The sequence is that of Membrane-bound lytic murein transglycosylase F from Pseudoalteromonas translucida (strain TAC 125).